The chain runs to 819 residues: Hypoxia-inducible factor 1-alpha (819 aa).

The disordered stretch occupies residues 1–31 (MEGAAGGEEKKNRMSSERRKEKSRDAARSRR). The interaction with TSGA10 stretch occupies residues 1–402 (MEGAAGGEEK…KEPDALTLLA (402 aa)). A compositionally biased stretch (basic and acidic residues) spans 7 to 31 (GEEKKNRMSSERRKEKSRDAARSRR). Positions 18–71 (RRKEKSRDAARSRRSKESEVFYELAHQLPLPHNVSSHLDKASVMRLTISYLRVR) constitute a bHLH domain. Residues 22-31 (KSRDAARSRR) form a DNA-binding region. The region spanning 86–159 (KAQMNCFYLK…THRNGPIKKG (74 aa)) is the PAS 1 domain. The segment at 171 to 192 (RMKCTLTSRGRTMNIKSATWKV) is required for heterodimer formation with ARNT. A PAS 2 domain is found at 229–299 (PHPSNIEIPL…KTHHDMFTKG (71 aa)). Position 248 is a phosphoserine; by CK1 (S248). One can recognise a PAC domain in the interval 303–346 (TGQYRMLAKRGGYVWVETQATVIYNTKNSQPQCIVCVNYVVSGI). The tract at residues 402–599 (APAAGDTIIS…NPPSVSTAFQ (198 aa)) is ODD. P403 is modified (4-hydroxyproline). Over residues 495–518 (IQDQPASPSDGSTRQSSPEPNSPS) the composition is skewed to polar residues. The segment at 495-521 (IQDQPASPSDGSTRQSSPEPNSPSEYC) is disordered. Residues 532 to 576 (FKLELVEKLFAEDTEAKNPFSTQDTDLDLEMLAPYIPMDDDFQLR) form an NTAD region. N6-acetyllysine; alternate is present on K533. A Glycyl lysine isopeptide (Lys-Gly) (interchain with G-Cter in ubiquitin); alternate cross-link involves residue K533. Residues K539 and K548 each participate in a glycyl lysine isopeptide (Lys-Gly) (interchain with G-Cter in ubiquitin) cross-link. S552 is subject to Phosphoserine; by GSK3-beta. Phosphothreonine; by GSK3-beta is present on T556. P565 is subject to 4-hydroxyproline. Position 577 is a phosphoserine; by PLK3 (S577). The ID stretch occupies residues 577–778 (SFDQLSPLES…SDLACRLLGQ (202 aa)). Residues 581-685 (LSPLESSSPN…SHPRSPNVLS (105 aa)) form a disordered region. Positions 582–613 (SPLESSSPNPPSVSTAFQQTQLQEPTITTTTT) are enriched in low complexity. The span at 614-628 (EELKTVTKDSTEDIK) shows a compositional bias: basic and acidic residues. A compositionally biased stretch (low complexity) spans 632–655 (TSPSSTHTPKETTTATTSSPYSGT). At S650 the chain carries Phosphoserine; by PLK3. N6-acetyllysine is present on K702. Positions 711–717 (RKRKMEH) match the Nuclear localization signal motif. Positions 779–819 (SMDGSGLPQLTSYDCEVNAPIQGSRNLLQGEELLRALDQVN) are CTAD. The residue at position 793 (C793) is an S-nitrosocysteine. A (3S)-3-hydroxyasparagine modification is found at N796.

Interacts with the ARNT; forms a heterodimer that binds core DNA sequence 5'-TACGTG-3' within the hypoxia response element (HRE) of target gene promoters. Interacts with COPS5; the interaction increases the transcriptional activity of HIF1A through increased stability. Interacts with EP300 (via TAZ-type 1 domains); the interaction is stimulated in response to hypoxia and inhibited by CITED2. Interacts with CREBBP (via TAZ-type 1 domains). Interacts with NCOA1, NCOA2, APEX1 and HSP90. Interacts (hydroxylated within the ODD domain) with VHLL (via beta domain); the interaction, leads to polyubiquitination and subsequent HIF1A proteasomal degradation. During hypoxia, sumoylated HIF1A also binds VHL; the interaction promotes the ubiquitination of HIF1A. Interacts with SENP1; the interaction desumoylates HIF1A resulting in stabilization and activation of transcription. Interacts (via the ODD domain) with NAA10; the interaction appears not to acetylate HIF1A nor have any affect on protein stability, during hypoxia. Interacts with RWDD3; the interaction enhances HIF1A sumoylation. Interacts with TSGA10. Interacts with HIF3A. Interacts with RORA (via the DNA binding domain); the interaction enhances HIF1A transcription under hypoxia through increasing protein stability. Interaction with PSMA7 inhibits the transactivation activity of HIF1A under both normoxic and hypoxia-mimicking conditions. Interacts with USP20. Interacts with RACK1; promotes HIF1A ubiquitination and proteasome-mediated degradation. Interacts (via N-terminus) with USP19. Interacts with SIRT2. Interacts (deacetylated form) with EGLN1. Interacts with CBFA2T3. Interacts with HSP90AA1 and HSP90AB1. Interacts with DCUN1D1; this interaction increases the interaction between VHL and DCUN1D1. Interacts with HIF1AN. In terms of processing, S-nitrosylation of Cys-793 may be responsible for increased recruitment of p300 coactivator necessary for transcriptional activity of HIF-1 complex. Post-translationally, acetylation of Lys-533 by ARD1 increases interaction with VHL and stimulates subsequent proteasomal degradation. Deacetylation of Lys-702 by SIRT2 increases its interaction with and hydroxylation by EGLN1 thereby inactivating HIF1A activity by inducing its proteasomal degradation. Requires phosphorylation for DNA-binding. Phosphorylation at Ser-248 by CSNK1D/CK1 represses kinase activity and impairs ARNT binding. Phosphorylation by GSK3-beta and PLK3 promote degradation by the proteasome. In terms of processing, the iron and 2-oxoglutarate dependent 3-hydroxylation of asparagine is (S) stereospecific within HIF CTAD domains. Post-translationally, sumoylated; with SUMO1 under hypoxia. Sumoylation is enhanced through interaction with RWDD3. Both sumoylation and desumoylation seem to be involved in the regulation of its stability during hypoxia. Sumoylation can promote either its stabilization or its VHL-dependent degradation by promoting hydroxyproline-independent HIF1A-VHL complex binding, thus leading to HIF1A ubiquitination and proteasomal degradation. Desumoylation by SENP1 increases its stability amd transcriptional activity. There is a disaccord between various publications on the effect of sumoylation and desumoylation on its stability and transcriptional activity. In normoxia, is hydroxylated on Pro-403 and Pro-565 in the oxygen-dependent degradation domain (ODD) by EGLN1/PHD2 and EGLN2/PHD1. EGLN3/PHD3 has also been shown to hydroxylate Pro-565. The hydroxylated prolines promote interaction with VHL, initiating rapid ubiquitination and subsequent proteasomal degradation. Deubiquitinated by USP20. Under hypoxia, proline hydroxylation is impaired and ubiquitination is attenuated, resulting in stabilization. In normoxia, is hydroxylated on Asn-796 by HIF1AN, thus abrogating interaction with CREBBP and EP300 and preventing transcriptional activation. Repressed by iron ion, via Fe(2+) prolyl hydroxylase (PHD) enzymes-mediated hydroxylation and subsequent proteasomal degradation.

It is found in the cytoplasm. Its subcellular location is the nucleus. The protein resides in the nucleus speckle. Induced by reactive oxygen species (ROS). Functions as a master transcriptional regulator of the adaptive response to hypoxia. Under hypoxic conditions, activates the transcription of over 40 genes, including erythropoietin, glucose transporters, glycolytic enzymes, vascular endothelial growth factor, HILPDA, and other genes whose protein products increase oxygen delivery or facilitate metabolic adaptation to hypoxia. Plays an essential role in embryonic vascularization, tumor angiogenesis and pathophysiology of ischemic disease. Heterodimerizes with ARNT; heterodimer binds to core DNA sequence 5'-TACGTG-3' within the hypoxia response element (HRE) of target gene promoters. Activation requires recruitment of transcriptional coactivators such as CREBBP and EP300. Activity is enhanced by interaction with NCOA1 and/or NCOA2. Interaction with redox regulatory protein APEX1 seems to activate CTAD and potentiates activation by NCOA1 and CREBBP. Involved in the axonal distribution and transport of mitochondria in neurons during hypoxia. The chain is Hypoxia-inducible factor 1-alpha (HIF1A) from Eospalax fontanierii baileyi (Plateau zokor).